The primary structure comprises 304 residues: Cell surface-binding protein OPG105 (304 aa).

The Alpha-carbonic anhydrase domain maps to 1 to 235 (MPQQLSPINI…NDDTQVYYSG (235 aa)). Over 1–275 (MPQQLSPINI…YQKYIEGNKT (275 aa)) the chain is Virion surface. The helical transmembrane segment at 276–294 (FAIIAIVFVFILTAILFLM) threads the bilayer. Topologically, residues 295–304 (SQRYSREKQN) are intravirion.

Belongs to the alpha-carbonic anhydrase family. As to quaternary structure, homodimer; disulfide-linked. Apparently non-glycosylated.

The protein localises to the virion membrane. Binds to chondroitin sulfate on the cell surface to provide virion attachment to target cell. The sequence is that of Cell surface-binding protein OPG105 (OPG105) from Monkeypox virus (strain Zaire-96-I-16) (MPX).